The chain runs to 195 residues: BAG family molecular chaperone regulator 1A (195 aa).

The Ubiquitin-like domain occupies 6 to 72 (STVTIHYGNQ…KLGLKNHSKI (67 aa)). Residues 78-98 (HKQQRGSKEKDTVEPAPKAEA) form a disordered region. Residues 83–98 (GSKEKDTVEPAPKAEA) show a composition bias toward basic and acidic residues. The 82-residue stretch at 109-190 (EIKAIDQYVD…KMLDHVDQTS (82 aa)) folds into the BAG domain.

As to quaternary structure, binds to the ATPase domain of HSP70/HSC chaperones.

In terms of biological role, inhibits the chaperone activity of HSP70/HSC70 by promoting substrate release. The protein is BAG family molecular chaperone regulator 1A (bag101) of Schizosaccharomyces pombe (strain 972 / ATCC 24843) (Fission yeast).